Reading from the N-terminus, the 885-residue chain is DNA mismatch repair protein MutS (885 aa).

626 to 633 (GPNMGGKS) is an ATP binding site.

It belongs to the DNA mismatch repair MutS family.

In terms of biological role, this protein is involved in the repair of mismatches in DNA. It is possible that it carries out the mismatch recognition step. This protein has a weak ATPase activity. This is DNA mismatch repair protein MutS from Burkholderia ambifaria (strain MC40-6).